A 171-amino-acid chain; its full sequence is 3-hydroxydecanoyl-[acyl-carrier-protein] dehydratase (171 aa).

H70 is a catalytic residue.

Belongs to the thioester dehydratase family. FabA subfamily. As to quaternary structure, homodimer.

It is found in the cytoplasm. It catalyses the reaction a (3R)-hydroxyacyl-[ACP] = a (2E)-enoyl-[ACP] + H2O. The catalysed reaction is (3R)-hydroxydecanoyl-[ACP] = (2E)-decenoyl-[ACP] + H2O. It carries out the reaction (2E)-decenoyl-[ACP] = (3Z)-decenoyl-[ACP]. It functions in the pathway lipid metabolism; fatty acid biosynthesis. Functionally, necessary for the introduction of cis unsaturation into fatty acids. Catalyzes the dehydration of (3R)-3-hydroxydecanoyl-ACP to E-(2)-decenoyl-ACP and then its isomerization to Z-(3)-decenoyl-ACP. Can catalyze the dehydratase reaction for beta-hydroxyacyl-ACPs with saturated chain lengths up to 16:0, being most active on intermediate chain length. The sequence is that of 3-hydroxydecanoyl-[acyl-carrier-protein] dehydratase from Shewanella sp. (strain MR-4).